A 145-amino-acid chain; its full sequence is Extracellular globin-2 (145 aa).

The region spanning 3-145 (QCGVLEGLKV…HIEDGIKGHH (143 aa)) is the Globin domain. Cys4 and Cys133 are disulfide-bonded. His96 is a heme b binding site.

It belongs to the globin family. As to quaternary structure, the extracellular hemoglobin of the earthworm consists of 12 subunits that have a hexagonal bilayer structure with a molecular weight near 3.8 million. Each one-twelfth subunit is composed primarily of disulfide linked trimers (chains A, B, and C) and monomers (chain D).

This Lumbricus terrestris (Common earthworm) protein is Extracellular globin-2.